Here is a 534-residue protein sequence, read N- to C-terminus: Lysophosphatidylcholine acyltransferase 1 (534 aa).

A disordered region spans residues 1–25 (MRLRGRGPRAAPSSSSGAGDARRLA). Over 1–57 (MRLRGRGPRAAPSSSSGAGDARRLAPPGRNPFVHELRLSALQKAQVAFMTLTLFPIR) the chain is Cytoplasmic. Over residues 8 to 19 (PRAAPSSSSGAG) the composition is skewed to low complexity. Residues 58–78 (LLFAAFMMLLAWPFALLASLG) traverse the membrane as a helical; Signal-anchor for type II membrane protein segment. The Lumenal portion of the chain corresponds to 79 to 534 (PPDKEPEQPL…GRKNSCKKAD (456 aa)). The HXXXXD motif motif lies at 135–140 (HSSYFD). EF-hand domains follow at residues 379-414 (PVSDALEDMFSLFDESGGGEIDLREYVVALSVVCRP) and 451-486 (VSELTVTDLFQAIDQEDKGRITFDDFCGFAEMYPDY). Residues aspartate 392, serine 394, glutamate 398, and glutamate 403 each contribute to the Ca(2+) site. Positions 531-534 (KKAD) match the Di-lysine motif motif.

This sequence belongs to the 1-acyl-sn-glycerol-3-phosphate acyltransferase family. In terms of tissue distribution, predominantly expressed in lung where it is enriched in alveolar type II cells. Expressed at lower levels in spleen and brain. Also detected in erythroleukemic cells and reticulocytes. Weakly or not expressed in other tissues.

The protein resides in the endoplasmic reticulum membrane. The protein localises to the golgi apparatus membrane. It is found in the cell membrane. Its subcellular location is the lipid droplet. It catalyses the reaction a 1-acyl-sn-glycero-3-phosphocholine + an acyl-CoA = a 1,2-diacyl-sn-glycero-3-phosphocholine + CoA. The enzyme catalyses a 1-O-alkyl-sn-glycero-3-phosphocholine + acetyl-CoA = a 1-O-alkyl-2-acetyl-sn-glycero-3-phosphocholine + CoA. The catalysed reaction is a 1-acyl-sn-glycero-3-phosphate + an acyl-CoA = a 1,2-diacyl-sn-glycero-3-phosphate + CoA. It carries out the reaction a 1-O-(1Z-alkenyl)-sn-glycero-3-phosphocholine + an acyl-CoA = a 1-O-(1Z-alkenyl)-2-acyl-sn-glycero-3-phosphocholine + CoA. It catalyses the reaction 1-acyl-sn-glycero-3-phospho-(1'-sn-glycerol) + an acyl-CoA = a 1,2-diacyl-sn-glycero-3-phospho-(1'-sn-glycerol) + CoA. The enzyme catalyses 1-hexadecanoyl-sn-glycero-3-phosphocholine + hexadecanoyl-CoA = 1,2-dihexadecanoyl-sn-glycero-3-phosphocholine + CoA. The catalysed reaction is 1-O-hexadecyl-sn-glycero-3-phosphocholine + hexadecanoyl-CoA = 1-O-hexadecyl-2-hexadecanoyl-sn-glycero-3-phosphocholine + CoA. It carries out the reaction a 1-O-(1Z-alkenyl)-sn-glycero-3-phosphocholine + hexadecanoyl-CoA = 1-O-(1Z)-alkenyl-2-hexadecanoyl-sn-glycero-3-phosphocholine + CoA. It catalyses the reaction 1-hexadecanoyl-sn-glycero-3-phospho-(1'-sn-glycerol) + hexadecanoyl-CoA = 1,2-dihexadecanoyl-sn-glycero-3-phospho-(1'-sn-glycerol) + CoA. The enzyme catalyses 1-dodecanoyl-sn-glycero-3-phosphocholine + hexadecanoyl-CoA = 1-dodecanoyl-2-hexadecanoyl-sn-glycero-3-phosphocholine + CoA. The catalysed reaction is 1-tetradecanoyl-sn-glycero-3-phosphocholine + hexadecanoyl-CoA = 1-tetradecanoyl-2-hexadecanoyl-sn-glycero-3-phosphocholine + CoA. It carries out the reaction 1-O-octadecyl-sn-glycero-3-phosphocholine + hexadecanoyl-CoA = 1-O-octadecyl-2-hexadecanoyl-sn-glycero-3-phosphocholine + CoA. It catalyses the reaction 1-octadecanoyl-sn-glycero-3-phosphocholine + hexadecanoyl-CoA = 1-octadecanoyl-2-hexadecanoyl-sn-glycero-3-phosphocholine + CoA. The enzyme catalyses 1-(9Z-octadecenoyl)-sn-glycero-3-phosphocholine + hexadecanoyl-CoA = 1-(9Z-octadecenoyl)-2-hexadecanoyl-sn-glycero-3-phosphocholine + CoA. The catalysed reaction is 1-eicosanoyl-sn-glycero-3-phosphocholine + hexadecanoyl-CoA = 1-eicosanoyl-2-hexadecanoyl-sn-glycero-3-phosphocholine + CoA. It carries out the reaction hexanoyl-CoA + 1-hexadecanoyl-sn-glycero-3-phosphocholine = 1-hexadecanoyl-2-hexanoyl-sn-glycero-3-phosphocholine + CoA. It catalyses the reaction octanoyl-CoA + 1-hexadecanoyl-sn-glycero-3-phosphocholine = 1-hexadecanoyl-2-octanoyl-sn-glycero-3-phosphocholine + CoA. The enzyme catalyses decanoyl-CoA + 1-hexadecanoyl-sn-glycero-3-phosphocholine = 1-hexadecanoyl-2-decanoyl-sn-glycero-3-phosphocholine + CoA. The catalysed reaction is dodecanoyl-CoA + 1-hexadecanoyl-sn-glycero-3-phosphocholine = 1-hexadecanoyl-2-dodecanoyl-sn-glycero-3-phosphocholine + CoA. It carries out the reaction tetradecanoyl-CoA + 1-hexadecanoyl-sn-glycero-3-phosphocholine = 1-hexadecanoyl-2-tetradecanoyl-sn-glycero-3-phosphocholine + CoA. It catalyses the reaction 1-hexadecanoyl-sn-glycero-3-phosphocholine + (9Z)-octadecenoyl-CoA = 1-hexadecanoyl-2-(9Z-octadecenoyl)-sn-glycero-3-phosphocholine + CoA. The enzyme catalyses (9Z,12Z)-octadecadienoyl-CoA + 1-hexadecanoyl-sn-glycero-3-phosphocholine = 1-hexadecanoyl-2-(9Z,12Z-octadecadienoyl)-sn-glycero-3-phosphocholine + CoA. The catalysed reaction is (4Z,7Z,10Z,13Z,16Z,19Z)-docosahexaenoyl-CoA + 1-hexadecanoyl-sn-glycero-3-phosphocholine = 1-hexadecanoyl-2-(4Z,7Z,10Z,13Z,16Z,19Z-docosahexaenoyl)-sn-glycero-3-phosphocholine + CoA. It carries out the reaction 1-hexadecanoyl-sn-glycero-3-phosphocholine + acetyl-CoA = 1-hexadecanoyl-2-acetyl-sn-glycero-3-phosphocholine + CoA. It catalyses the reaction eicosanoyl-CoA + 1-hexadecanoyl-sn-glycero-3-phosphocholine = 1-hexadecanoyl-2-eicosanoyl-sn-glycero-3-phosphocholine + CoA. The enzyme catalyses 1-O-hexadecyl-sn-glycero-3-phosphocholine + acetyl-CoA = 1-O-hexadecyl-2-acetyl-sn-glycero-3-phosphocholine + CoA. The catalysed reaction is a 1-acyl-sn-glycero-3-phosphocholine + hexadecanoyl-CoA = 1-acyl-2-hexadecanoyl-sn-glycero-3-phosphocholine + CoA. It carries out the reaction a 1-acyl-sn-glycero-3-phosphate + hexadecanoyl-CoA = 1-acyl-2-hexadecanoyl-sn-glycero-3-phosphate + CoA. It catalyses the reaction 1-acyl-sn-glycero-3-phospho-(1'-sn-glycerol) + hexadecanoyl-CoA = 1-acyl-2-hexadecanoyl-sn-glycero-3-phospho-(1'-sn-glycerol) + CoA. Its pathway is lipid metabolism; phospholipid metabolism. Not activated by inflammatory stimulation. Inhibited by Cu(2+), Fe(2+), Ca(2+) and Mg(2+). Activity is not affected by Co(2+) or Mn(2+). In terms of biological role, exhibits both acyltransferase and acetyltransferase activities. Activity is calcium-independent. Catalyzes the conversion of lysophosphatidylcholine (1-acyl-sn-glycero-3-phosphocholine or LPC) into phosphatidylcholine (1,2-diacyl-sn-glycero-3-phosphocholine or PC). Catalyzes the conversion 1-acyl-sn-glycerol-3-phosphate (lysophosphatidic acid or LPA) into 1,2-diacyl-sn-glycerol-3-phosphate (phosphatidic acid or PA) by incorporating an acyl moiety at the sn-2 position of the glycerol backbone. Displays a clear preference for saturated fatty acyl-CoAs, and 1-myristoyl or 1-palmitoyl LPC as acyl donors and acceptors, respectively. Involved in platelet-activating factor (PAF) biosynthesis by catalyzing the conversion of the PAF precursor, 1-O-alkyl-sn-glycero-3-phosphocholine (lyso-PAF) into 1-O-alkyl-2-acetyl-sn-glycero-3-phosphocholine (PAF). May synthesize phosphatidylcholine in pulmonary surfactant, thereby playing a pivotal role in respiratory physiology. Involved in the regulation of lipid droplet number and size. In Mus musculus (Mouse), this protein is Lysophosphatidylcholine acyltransferase 1 (Lpcat1).